The chain runs to 341 residues: Phenylalanine--tRNA ligase alpha subunit (341 aa).

Residue Glu-259 coordinates Mg(2+).

It belongs to the class-II aminoacyl-tRNA synthetase family. Phe-tRNA synthetase alpha subunit type 1 subfamily. Tetramer of two alpha and two beta subunits. Requires Mg(2+) as cofactor.

The protein localises to the cytoplasm. The enzyme catalyses tRNA(Phe) + L-phenylalanine + ATP = L-phenylalanyl-tRNA(Phe) + AMP + diphosphate + H(+). In Mycobacterium bovis (strain ATCC BAA-935 / AF2122/97), this protein is Phenylalanine--tRNA ligase alpha subunit.